The chain runs to 353 residues: MTAILERRESESLWGRFCNWITSTENRLYIGWFGVLMIPTLLTATSVFIIAFIAAPPVDIDGIREPVSGSLLYGNNIISGAIIPTSAAIGLHFYPIWEAASVDEWLYNGGPYELIVLHFLLGVACYMGREWELSFRLGMRPWIAVAYSAPVAAATAVFLIYPIGQGSFSDGMPLGISGTFNFMIVFQAEHNILMHPFHMLGVAGVFGGSLFSAMHGSLVTSSLIRETTENESANEGYRFGQEEETYNIVAAHGYFGRLIFQYASFNNSRSLHFFLAAWPVVGIWFTALGISTMAFNLNGFNFNQSVVDSQGRVINTWADIINRANLGMEVMHERNAHNFPLDLAAIEAPSTNG.

N-acetylthreonine is present on T2. T2 carries the phosphothreonine modification. 3 consecutive transmembrane segments (helical) span residues 29-46 (YIGW…TATS), 118-133 (HFLL…EWEL), and 142-156 (WIAV…AATA). H118 is a chlorophyll a binding site. Y126 is a pheophytin a binding site. D170 and E189 together coordinate [CaMn4O5] cluster. Residues 197 to 218 (FHMLGVAGVFGGSLFSAMHGSL) traverse the membrane as a helical segment. Residue H198 participates in chlorophyll a binding. A quinone contacts are provided by residues H215 and 264 to 265 (SF). A Fe cation-binding site is contributed by H215. A Fe cation-binding site is contributed by H272. Residues 274–288 (FLAAWPVVGIWFTAL) form a helical membrane-spanning segment. [CaMn4O5] cluster is bound by residues H332, E333, D342, and A344. The propeptide occupies 345 to 353 (AIEAPSTNG).

Belongs to the reaction center PufL/M/PsbA/D family. PSII is composed of 1 copy each of membrane proteins PsbA, PsbB, PsbC, PsbD, PsbE, PsbF, PsbH, PsbI, PsbJ, PsbK, PsbL, PsbM, PsbT, PsbX, PsbY, PsbZ, Psb30/Ycf12, at least 3 peripheral proteins of the oxygen-evolving complex and a large number of cofactors. It forms dimeric complexes. The cofactor is The D1/D2 heterodimer binds P680, chlorophylls that are the primary electron donor of PSII, and subsequent electron acceptors. It shares a non-heme iron and each subunit binds pheophytin, quinone, additional chlorophylls, carotenoids and lipids. D1 provides most of the ligands for the Mn4-Ca-O5 cluster of the oxygen-evolving complex (OEC). There is also a Cl(-1) ion associated with D1 and D2, which is required for oxygen evolution. The PSII complex binds additional chlorophylls, carotenoids and specific lipids.. In terms of processing, tyr-161 forms a radical intermediate that is referred to as redox-active TyrZ, YZ or Y-Z. Post-translationally, C-terminally processed by CTPA; processing is essential to allow assembly of the oxygen-evolving complex and thus photosynthetic growth.

The protein resides in the plastid. The protein localises to the chloroplast thylakoid membrane. The catalysed reaction is 2 a plastoquinone + 4 hnu + 2 H2O = 2 a plastoquinol + O2. Functionally, photosystem II (PSII) is a light-driven water:plastoquinone oxidoreductase that uses light energy to abstract electrons from H(2)O, generating O(2) and a proton gradient subsequently used for ATP formation. It consists of a core antenna complex that captures photons, and an electron transfer chain that converts photonic excitation into a charge separation. The D1/D2 (PsbA/PsbD) reaction center heterodimer binds P680, the primary electron donor of PSII as well as several subsequent electron acceptors. The sequence is that of Photosystem II protein D1 from Nicotiana debneyi (Debney's tobacco).